The chain runs to 135 residues: Galectin-1 (135 aa).

Alanine 2 carries the post-translational modification N-acetylalanine. In terms of domain architecture, Galectin spans 4 to 135 (GLVASNLNLK…DFKIKCVAFE (132 aa)). An N6-acetyllysine mark is found at lysine 13, lysine 19, and lysine 29. Position 30 is a phosphoserine (serine 30). A beta-D-galactoside-binding positions include 45–49 (HFNPR), histidine 53, asparagine 62, and 69–72 (WGTE). The residue at position 108 (lysine 108) is an N6-acetyllysine; alternate. Lysine 108 bears the N6-succinyllysine; alternate mark. An N6-acetyllysine modification is found at lysine 128.

In terms of assembly, homodimer. Binds LGALS3BP. Interacts with CD2, CD3, CD4, CD6, CD7, CD43, ALCAM and CD45. Interacts with laminin (via poly-N-acetyllactosamine). Interacts with SUSD2. Interacts with cargo receptor TMED10; the interaction mediates the translocation from the cytoplasm into the ERGIC (endoplasmic reticulum-Golgi intermediate compartment) and thereby secretion. Interacts with CD69.

The protein localises to the secreted. Its subcellular location is the extracellular space. The protein resides in the extracellular matrix. It is found in the cytoplasm. Its function is as follows. Lectin that binds beta-galactoside and a wide array of complex carbohydrates. Plays a role in regulating apoptosis, cell proliferation and cell differentiation. Inhibits CD45 protein phosphatase activity and therefore the dephosphorylation of Lyn kinase. Strong inducer of T-cell apoptosis. Plays a negative role in Th17 cell differentiation via activation of the receptor CD69. This Mus musculus (Mouse) protein is Galectin-1 (Lgals1).